The chain runs to 575 residues: Cytokinin dehydrogenase 1 (575 aa).

The first 31 residues, 1–31, serve as a signal peptide directing secretion; it reads MGLTSSLRFHRQNNKTFLGIFMILVLSCIPG. N-linked (GlcNAc...) asparagine glycans are attached at residues Asn-14, Asn-38, and Asn-115. Residues 84–262 form the FAD-binding PCMH-type domain; that stretch reads YQLPPLAILH…TRARISLEPA (179 aa). Ala-120, Gly-122, and Gly-124 together coordinate FAD. The residue at position 125 (His-125) is a Pros-8alpha-FAD histidine. Residues Ser-126, Gln-130, Asp-186, Thr-191, Ser-197, Ile-201, and Ile-252 each contribute to the FAD site. 4 N-linked (GlcNAc...) asparagine glycosylation sites follow: Asn-303, Asn-318, Asn-437, and Asn-467. FAD-binding residues include Tyr-498 and Gln-536.

This sequence belongs to the oxygen-dependent FAD-linked oxidoreductase family. FAD is required as a cofactor. Expressed in shoot apexes, lateral shoot meristems, growing tissues of young flowers, and weakly at the root-hypocotyl junction.

The protein resides in the vacuole. The enzyme catalyses N(6)-dimethylallyladenine + A + H2O = 3-methyl-2-butenal + adenine + AH2. Functionally, catalyzes the oxidation of cytokinins, a family of N(6)-substituted adenine derivatives that are plant hormones, where the substituent is an isopentenyl group. Catalyzes in vitro the oxidation of various types of cytokinin nucleotides that are known as direct products of cytokinin biosynthesis. Promotes adventitious root initiation downstream of MYC2-dependent jasmonate signaling. Cytokinin degraded by CKX1 is required for cell division in the female gametophyte by modulating the expression of cell cycle genes. This Arabidopsis thaliana (Mouse-ear cress) protein is Cytokinin dehydrogenase 1 (CKX1).